Reading from the N-terminus, the 94-residue chain is Progonadoliberin-3 (94 aa).

The N-terminal stretch at 1-23 is a signal peptide; that stretch reads MEGKGRVLVQLLMLACVLEVSLC. Gln24 is modified (pyrrolidone carboxylic acid). Position 33 is a glycine amide (Gly33).

It belongs to the GnRH family.

The protein localises to the secreted. Its function is as follows. Stimulates the secretion of gonadotropins. The chain is Progonadoliberin-3 (gnrh3) from Carassius auratus (Goldfish).